Consider the following 310-residue polypeptide: MKHLHIIDSHTGGEPTRVVVSGFPPLGDGPMAERLAALARDHDRYRTACILEPRGSDVLVGALLCEPVSAGAAAGVIFFNNAGYLGMCGHGTIGLVRTLHHMGRIAPGVHRIETPVGDVEATLHDDLSVSVRNVLAYRHAKDVVVEVPGHGSVTGDVAWGGNWFFLVSDHGQRIAGENVAALAAYASAVRAGLERAGVTGRDGAPIDHIELFADDPEHDSRSFVLCPGHAYDRSPCGTGTSAKLACLAADGKLAPGAAWRQASVIGSVFSASYERAESGVVPTIRGSAHLSAEATLLIEDDDPFGWGIVS.

The Proton acceptor role is filled by Cys-88. Substrate-binding positions include 89–90 (GH), His-208, and Asp-232. Cys-236 acts as the Proton donor in catalysis. Residue 237–238 (GT) coordinates substrate.

It belongs to the proline racemase family.

It catalyses the reaction trans-4-hydroxy-L-proline = cis-4-hydroxy-D-proline. In terms of biological role, catalyzes the epimerization of trans-4-hydroxy-L-proline (t4LHyp) to cis-4-hydroxy-D-proline (c4DHyp). Is likely involved in a degradation pathway that converts t4LHyp to alpha-ketoglutarate. Can also catalyze the dehydration of trans-3-hydroxy-L-proline (t3LHyp) to Delta(1)-pyrroline-2-carboxylate (Pyr2C), albeit with 42-fold lower efficiency. Displays no proline racemase activity. This is 4-hydroxyproline 2-epimerase from Burkholderia thailandensis (strain ATCC 700388 / DSM 13276 / CCUG 48851 / CIP 106301 / E264).